Reading from the N-terminus, the 579-residue chain is Arginine--tRNA ligase (579 aa).

Positions 123-133 (PNLAKEMHVGH) match the 'HIGH' region motif.

Belongs to the class-I aminoacyl-tRNA synthetase family. In terms of assembly, monomer.

Its subcellular location is the cytoplasm. The catalysed reaction is tRNA(Arg) + L-arginine + ATP = L-arginyl-tRNA(Arg) + AMP + diphosphate. The protein is Arginine--tRNA ligase of Saccharophagus degradans (strain 2-40 / ATCC 43961 / DSM 17024).